The following is a 159-amino-acid chain: Transcriptional repressor NrdR (159 aa).

A disordered region spans residues methionine 1 to asparagine 22. The segment at cysteine 3–cysteine 34 is a zinc-finger region. The segment covering threonine 11–asparagine 22 has biased composition (basic and acidic residues). In terms of domain architecture, ATP-cone spans leucine 49–aspartate 139.

Belongs to the NrdR family. Zn(2+) is required as a cofactor.

Functionally, negatively regulates transcription of bacterial ribonucleotide reductase nrd genes and operons by binding to NrdR-boxes. The protein is Transcriptional repressor NrdR of Agrobacterium fabrum (strain C58 / ATCC 33970) (Agrobacterium tumefaciens (strain C58)).